The chain runs to 445 residues: Phosphoglucosamine mutase (445 aa).

Ser99 serves as the catalytic Phosphoserine intermediate. Ser99, Asp242, Asp244, and Asp246 together coordinate Mg(2+). Phosphoserine is present on Ser99.

The protein belongs to the phosphohexose mutase family. Requires Mg(2+) as cofactor. Post-translationally, activated by phosphorylation.

The catalysed reaction is alpha-D-glucosamine 1-phosphate = D-glucosamine 6-phosphate. Catalyzes the conversion of glucosamine-6-phosphate to glucosamine-1-phosphate. The polypeptide is Phosphoglucosamine mutase (Helicobacter pylori (strain HPAG1)).